A 594-amino-acid chain; its full sequence is Capsid vertex component 1 (594 aa).

Disordered regions lie at residues 52–77 (GRST…DAVG), 176–205 (NKRD…NGSD), 443–468 (ARRQ…SGPP), and 575–594 (GRQE…FDDL). Acidic residues predominate over residues 61–76 (GDEDDAPASDDAEDAV).

It belongs to the herpesviridae CVC1 protein family. Interacts (via C-terminus) with capsid vertex component 2/CVC2.

The protein localises to the virion. It localises to the host nucleus. Its function is as follows. Capsid vertex-specific component that plays a role during viral DNA encapsidation, assuring correct genome cleavage and presumably stabilizing capsids that contain full-length viral genomes. This is Capsid vertex component 1 from Homo sapiens (Human).